A 546-amino-acid chain; its full sequence is Nuclear rim protein 1 (546 aa).

2 stretches are compositionally biased toward basic and acidic residues: residues 1–10 (MAFWRNRHES) and 25–35 (QNSEDIREDNN). The segment at 1–35 (MAFWRNRHESPAISQERSPSPDRFQNSEDIREDNN) is disordered. Helical transmembrane passes span 155 to 175 (FYLLTVLLLITNISVTYRYLF) and 249 to 269 (FLTSFFVSFSPIAFCFLWMTD). Disordered regions lie at residues 405 to 441 (YPSRQHSPRLSPSRYSHLQSGNTPSAPSTPLLIPSQQ) and 505 to 546 (RQGY…SPFR). Positions 406-441 (PSRQHSPRLSPSRYSHLQSGNTPSAPSTPLLIPSQQ) are enriched in polar residues. The segment covering 533–546 (SKSPFRNSSSSPFR) has biased composition (low complexity).

It belongs to the NUR1 family.

The protein localises to the nucleus membrane. In terms of biological role, member of a perinuclear network that controls recombination at multiple loci to maintain genome stability. Required for rDNA repeat stability. The protein is Nuclear rim protein 1 (NUR1) of Kluyveromyces lactis (strain ATCC 8585 / CBS 2359 / DSM 70799 / NBRC 1267 / NRRL Y-1140 / WM37) (Yeast).